We begin with the raw amino-acid sequence, 792 residues long: MADAWEEIRRLAADFQRAQFAEATQRLSERNCIEIVNKLIAQKQLEVVHTLDGKEYITPAQISKEMRDELHVRGGRVNIVDLQQAINVDLTHIENRIGDIVKSEKHVQLVLGQLIDENYLDRLAEEVNDKLQESGQVTIAELCKTYDLPGNFLTQALTQRLGRIINGHIDLDNRGVIFTEAFVSRHKARIRGLFSAITRPTAVNSLISRYGFQEQLLYSVLEELVNDGRLRGTVVGGRQDKAVFIPDIYSRTQSTWVDSFLRQNGYLEFDALSRLGIPDAMSYIKKRYKTTQLLFLKAACVGQGLVDQVEASVEEAISSGTWVDIAPLLPSSLSVEDAAILLQHVMRALSKQASAVVFSDTIVVSEKFINDCTDLFSELMHQKAEKEMKNNPVHLITEEDLKQISILESINTSKKDKKDERRRKATEGSGSVRGGGGSNAREYKIKKTKKKGRKDDDSDDESSHTGKKKPEITFMFQDEIEDFLRKHLQDAPEEFISELAEYLIKPLNKTYLEVVHSVYMSSTSSASGTGRKRTIKDLQEEVSNLYNNIRLFEKGMKFFTDDTQAALTKHLLKTVCTDITNLVFNFLASDLMMAVDDPATITSEVRKKILSKLSEETKVALTKLHNSLNEKSIEDFLACLDSAAEACDIMLKKGDKKRERQVLFQHRQALVEQLKVTEDPALTLHLTSVLLFQFSTHSMLHAPGRCVPQIIAFLSSKIPEDQHALLVKYQGLVVKHLVSQNKKTGQGEDPLSDELDKEQEDIINTTRKELQELSSSIKDLVLKSRKSSVTEE.

An N-acetylalanine modification is found at Ala-2. The tract at residues 2–200 is mediates interaction with DDRGK1; it reads ADAWEEIRRL…RGLFSAITRP (199 aa). The interval 2-212 is required for E3 UFM1-protein ligase activity; the sequence is ADAWEEIRRL…VNSLISRYGF (211 aa). The segment at 121–250 is involved in CDK5RAP3-binding; the sequence is DRLAEEVNDK…KAVFIPDIYS (130 aa). The interval 200–400 is mediates interaction with TRIP4; it reads PTAVNSLISR…NPVHLITEED (201 aa). Residues 412 to 471 form a disordered region; that stretch reads TSKKDKKDERRRKATEGSGSVRGGGGSNAREYKIKKTKKKGRKDDDSDDESSHTGKKKPE. Arg-433 carries the post-translational modification Omega-N-methylarginine. The span at 453–471 shows a compositional bias: basic and acidic residues; that stretch reads RKDDDSDDESSHTGKKKPE. Ser-458 bears the Phosphoserine mark. Positions 488–682 are mediates interaction with CDK5RAP3; it reads LQDAPEEFIS…QLKVTEDPAL (195 aa). Thr-534 bears the Phosphothreonine mark. Position 752 is a phosphoserine (Ser-752).

The protein belongs to the UFL1 family. As to quaternary structure, catalytic component of the UFM1 ribosome E3 ligase (UREL) complex, composed of UFL1, DDRGK1 and CDK5RAP3. Interacts with E2-like enzyme UFC1. Interacts with RELA. Interacts with NBN; promoting recruitment to double-strand breaks following DNA damage. Interacts (when phosphorylated) with YWHAG/14-3-3-gamma; sequestering UFL1 and preventing its association with PDCD1/PD-1 substrate. In terms of processing, ubiquitinated, leading to its degradation by the proteasome. Interaction with CDK5RAP3 protects both proteins against ubiquitination and degradation via the proteasome. Phosphorylation at Thr-534 by AMPK promotes its interaction with YWHAG/14-3-3-gamma, thereby preventing UFL1 association with PDCD1/PD-1 substrate.

It localises to the endoplasmic reticulum membrane. The protein resides in the cytoplasm. Its subcellular location is the cytosol. It is found in the nucleus. The protein localises to the chromosome. Functionally, E3 protein ligase that mediates ufmylation, the covalent attachment of the ubiquitin-like modifier UFM1 to lysine residues on target proteins, and which plays a key role in various processes, such as ribosome recycling, response to DNA damage, interferon response or reticulophagy (also called ER-phagy). Catalyzes ufmylation of many protein, such as CD274/PD-L1, CDK5RAP3, CYB5R3, DDRGK1, EIF6, histone H4, MRE11, P4HB, PDCD1/PD-1, TRIP4, RPN1, RPS20/uS10, RPL10/uL16, RPL26/uL24, SYVN1/HRD1 and TP53/p53. As part of the UREL complex, plays a key role in ribosome recycling by catalyzing mono-ufmylation of RPL26/uL24 subunit of the 60S ribosome. Ufmylation of RPL26/uL24 occurs on free 60S ribosomes following ribosome dissociation: it weakens the junction between post-termination 60S subunits and SEC61 translocons, promoting release and recycling of the large ribosomal subunit from the endoplasmic reticulum membrane. Ufmylation of RPL26/uL24 and subsequent 60S ribosome recycling either take place after normal termination of translation or after ribosome stalling during cotranslational translocation at the endoplasmic reticulum. Involved in reticulophagy in response to endoplasmic reticulum stress by mediating ufmylation of proteins such as CYB5R3 and RPN1, thereby promoting lysosomal degradation of ufmylated proteins. Ufmylation in response to endoplasmic reticulum stress is essential for processes such as hematopoiesis, blood vessel morphogenesis or inflammatory response. Regulates inflammation in response to endoplasmic reticulum stress by promoting reticulophagy, leading to inhibit the activity of the NF-kappa-B transcription factor. Mediates ufmylation of DDRGK1 and CDK5RAP3; the role of these modifications is however unclear: as both DDRGK1 and CDK5RAP3 act as substrate adapters for ufmylation, it is uncertain whether ufmylation of these proteins is, a collateral effect or is required for ufmylation. Acts as a negative regulator of T-cell activation by mediating ufmylation and stabilization of PDCD1/PD-1. Also involved in the response to DNA damage: recruited to double-strand break sites following DNA damage and mediates monoufmylation of histone H4 and ufmylation of MRE11. Mediates ufmylation of TP53/p53, promoting its stability. Catalyzes ufmylation of TRIP4, thereby playing a role in nuclear receptor-mediated transcription. Required for hematopoietic stem cell function and hematopoiesis. The polypeptide is E3 UFM1-protein ligase 1 (Bos taurus (Bovine)).